We begin with the raw amino-acid sequence, 192 residues long: UPF0312 protein YPK_1931 (192 aa).

The N-terminal stretch at 1–23 is a signal peptide; the sequence is MINKTLLGLSLGALMFTAGSAVA.

Belongs to the UPF0312 family. Type 1 subfamily.

The protein localises to the periplasm. This Yersinia pseudotuberculosis serotype O:3 (strain YPIII) protein is UPF0312 protein YPK_1931.